The primary structure comprises 651 residues: Bromodomain-containing protein 7 (651 aa).

A Glycyl lysine isopeptide (Lys-Gly) (interchain with G-Cter in SUMO2) cross-link involves residue Lys21. Polar residues predominate over residues Thr35–Asp45. Residues Thr35 to Glu132 form a disordered region. Residues Ser47 to Lys57 are compositionally biased toward basic and acidic residues. Lys52 participates in a covalent cross-link: Glycyl lysine isopeptide (Lys-Gly) (interchain with G-Cter in SUMO2). Basic residues predominate over residues His58–Gly69. Residues Lys65–Arg96 carry the Nuclear localization signal motif. Over residues Glu70 to Gln106 the composition is skewed to basic and acidic residues. Glycyl lysine isopeptide (Lys-Gly) (interchain with G-Cter in SUMO2) cross-links involve residues Lys127, Lys186, Lys197, Lys201, Lys212, and Lys241. Residues Val131–Glu235 enclose the Bromo domain. The interval Thr253–Met301 is disordered. Residues Gln273 to Met301 show a composition bias toward basic and acidic residues. Phosphoserine occurs at positions 279 and 289. Glycyl lysine isopeptide (Lys-Gly) (interchain with G-Cter in SUMO2) cross-links involve residues Lys305 and Lys307. Lys328 bears the N6-acetyllysine mark. Lys344 participates in a covalent cross-link: Glycyl lysine isopeptide (Lys-Gly) (interchain with G-Cter in SUMO2). Ser380 carries the phosphoserine modification. Residue Lys389 forms a Glycyl lysine isopeptide (Lys-Gly) (interchain with G-Cter in SUMO2) linkage. Ser482 carries the post-translational modification Phosphoserine. Thr514 is modified (phosphothreonine). Residues Ser536–Arg567 are a coiled coil. Ser621 carries the post-translational modification Phosphoserine.

Interacts with TRIM24, PTPN13 and DVL1. Identified in a complex with SMARCA4/BRG1, SMARCC1/BAF155, SMARCE1/BAF57, DPF2/BAF45D and ARID2, subunits of the SWI/SNF-B (PBAF) chromatin remodeling complex. Interacts with IRF2 and HNRPUL1. Interacts (via N-terminus) with TP53. Interacts (via C-terminus) with EP300. Interacts with BRCA1. Interacts (via bromo domain) with histone H3 (via N-terminus) acetylated at 'Lys-14' (H3K14ac). Has low affinity for histone H3 acetylated at 'Lys-9' (H3K9ac). Has the highest affinity for histone H3 that is acetylated both at 'Lys-9' (H3K9ac) and at 'Lys-14' (H3K14ac). Has very low affinity for non-acetylated histone H3. Interacts (via bromo domain) with histone H4 (via N-terminus) acetylated at 'Lys-8' (H3K8ac) (in vitro).

The protein resides in the nucleus. It is found in the chromosome. Functionally, acts both as coactivator and as corepressor. May play a role in chromatin remodeling. Activator of the Wnt signaling pathway in a DVL1-dependent manner by negatively regulating the GSK3B phosphotransferase activity. Induces dephosphorylation of GSK3B at 'Tyr-216'. Down-regulates TRIM24-mediated activation of transcriptional activation by AR. Transcriptional corepressor that down-regulates the expression of target genes. Binds to target promoters, leading to increased histone H3 acetylation at 'Lys-9' (H3K9ac). Binds to the ESR1 promoter. Recruits BRCA1 and POU2F1 to the ESR1 promoter. Coactivator for TP53-mediated activation of transcription of a set of target genes. Required for TP53-mediated cell-cycle arrest in response to oncogene activation. Promotes acetylation of TP53 at 'Lys-382', and thereby promotes efficient recruitment of TP53 to target promoters. Inhibits cell cycle progression from G1 to S phase. This Homo sapiens (Human) protein is Bromodomain-containing protein 7 (BRD7).